We begin with the raw amino-acid sequence, 292 residues long: MSERRLLLVHAHPDDETLTTGGTIARYAADGADVHVLTCTLGEEGEVIGEEWAQLVADAADQLGGFRIGELTSALSCLGAGRPRFLLGAGHFRDSGMAGTASAADPRAFVNADRDSLTAAIVAVIRELRPHVVVTYDPDGGYGHPDHIQVHTVTTAAVEAAGSAQYPDCGEPWEVAKLYWTVTEASALESGICRIGDIPDGWRLPEPGELPSVPDADVTTVIDVRAVLDAKREALSAHATQVTVAPSGTEYALSNDIAQPILAEEHFVLVRGAAGERDADGRERDLFGGIGH.

Zn(2+)-binding residues include histidine 12, aspartate 15, and histidine 147.

This sequence belongs to the MshB deacetylase family. Zn(2+) serves as cofactor.

It catalyses the reaction 1D-myo-inositol 2-acetamido-2-deoxy-alpha-D-glucopyranoside + H2O = 1D-myo-inositol 2-amino-2-deoxy-alpha-D-glucopyranoside + acetate. Catalyzes the deacetylation of 1D-myo-inositol 2-acetamido-2-deoxy-alpha-D-glucopyranoside (GlcNAc-Ins) in the mycothiol biosynthesis pathway. The polypeptide is 1D-myo-inositol 2-acetamido-2-deoxy-alpha-D-glucopyranoside deacetylase (Rhodococcus jostii (strain RHA1)).